Here is a 260-residue protein sequence, read N- to C-terminus: Snake venom serine proteinase 4a (260 aa).

Positions 1–18 (MVLIRVLANLLILQLSYA) are cleaved as a signal peptide. A propeptide spanning residues 19 to 24 (QMSSEL) is cleaved from the precursor. The 227-residue stretch at 25 to 251 (VTGGDECNRN…HLDWIQRIIA (227 aa)) folds into the Peptidase S1 domain. Intrachain disulfides connect C31-C163, C50-C66, C98-C258, C142-C212, C174-C191, and C202-C227. Catalysis depends on H65, which acts as the Charge relay system. Residue N103 is glycosylated (N-linked (GlcNAc...) asparagine). The active-site Charge relay system is the D110. Residue S206 is the Charge relay system of the active site.

Belongs to the peptidase S1 family. Snake venom subfamily. Monomer. In terms of tissue distribution, expressed by the venom gland.

It localises to the secreted. Snake venom serine protease that may act in the hemostasis system of the prey. This is Snake venom serine proteinase 4a from Crotalus adamanteus (Eastern diamondback rattlesnake).